A 608-amino-acid chain; its full sequence is Probable adenylate kinase 5, chloroplastic (608 aa).

Low complexity predominate over residues 1–20 (MAASSSSSSPAAASAPFAAP). The segment at 1 to 44 (MAASSSSSSPAAASAPFAAPGPHRRPGLALRPSPPTPPSSSLSC) is disordered. The N-terminal 75 residues, 1–75 (MAASSSSSSP…GPRGMGLRCR (75 aa)), are a transit peptide targeting the chloroplast. 99 to 104 (ASGKGT) serves as a coordination point for ATP. The tract at residues 119–148 (STGDLLRAEVSSGTEIGKKAKEYMDNGMLV) is NMP. Residues T120, R125, 146–148 (MLV), 175–178 (GYPR), and Q182 each bind AMP. Residues R209, R213, and 222-223 (IY) contribute to the ATP site. The segment at 212-245 (GRRLDPETGKIYHIKNFPPENDEVSARLVTRSDD) is LID. R242 and R253 together coordinate AMP.

Belongs to the adenylate kinase family.

It is found in the plastid. Its subcellular location is the chloroplast. The catalysed reaction is AMP + ATP = 2 ADP. Its function is as follows. Catalyzes the reversible transfer of the terminal phosphate group between ATP and AMP. Plays an important role in cellular energy homeostasis and in adenine nucleotide metabolism. This is Probable adenylate kinase 5, chloroplastic from Oryza sativa subsp. japonica (Rice).